We begin with the raw amino-acid sequence, 331 residues long: Phosphoribosylformylglycinamidine cyclo-ligase (331 aa).

This sequence belongs to the AIR synthase family.

The protein localises to the cytoplasm. It carries out the reaction 2-formamido-N(1)-(5-O-phospho-beta-D-ribosyl)acetamidine + ATP = 5-amino-1-(5-phospho-beta-D-ribosyl)imidazole + ADP + phosphate + H(+). It functions in the pathway purine metabolism; IMP biosynthesis via de novo pathway; 5-amino-1-(5-phospho-D-ribosyl)imidazole from N(2)-formyl-N(1)-(5-phospho-D-ribosyl)glycinamide: step 2/2. In Clostridium kluyveri (strain NBRC 12016), this protein is Phosphoribosylformylglycinamidine cyclo-ligase.